The sequence spans 251 residues: Orcokinin peptides type A (251 aa).

A signal peptide spans 1 to 20; that stretch reads MTAQMFTIALLLSLSAIAAA. 3 propeptides span residues 21–46, 225–231, and 249–251; these read GTIK…GAPV, DYDVFPD, and NVE.

The protein belongs to the orcokinin family.

Its subcellular location is the secreted. Its function is as follows. Myotropic peptides that enhance both the frequency and amplitude of spontaneous hindgut contractions. The chain is Orcokinin peptides type A from Procambarus clarkii (Red swamp crayfish).